The sequence spans 296 residues: Polyadenylate-binding protein 2 (296 aa).

Positions 1–102 (MAAVSSAASL…EEEPGELTGD (102 aa)) are disordered. Composition is skewed to gly residues over residues 19–31 (LRGG…GGQD) and 71–82 (GRGGSGGGGAGG). Residues 84–97 (EELEDEELEEEEPG) show a composition bias toward acidic residues. Residues 107–141 (DPELEAIKARVREMEEEAEKLKELQNEVEKQMNMS) adopt a coiled-coil conformation. The necessary for homooligomerization stretch occupies residues 146 to 296 (NAGPVIMSIE…ARVTSWYTPY (151 aa)). Positions 163–240 (RSIYVGNVDY…RQIKVVPKRT (78 aa)) constitute an RRM domain.

In terms of assembly, monomer and homooligomer. Binds RNA as a monomer and oligomerizes when bound to poly(A).

It is found in the nucleus. The protein resides in the cytoplasm. Involved in the 3'-end formation of mRNA precursors (pre-mRNA) by the addition of a poly(A) tail of 200-250 nt to the upstream cleavage product. Stimulates poly(A) polymerase (PAPOLA) conferring processivity on the poly(A) tail elongation reaction and also controls the poly(A) tail length. Increases the affinity of poly(A) polymerase for RNA. Binds to poly(A) and to poly(G) with high affinity. May protect the poly(A) tail from degradation. This is Polyadenylate-binding protein 2 from Xenopus tropicalis (Western clawed frog).